Consider the following 382-residue polypeptide: Alanine racemase (382 aa).

Lys-37 (proton acceptor; specific for D-alanine) is an active-site residue. An N6-(pyridoxal phosphate)lysine modification is found at Lys-37. Arg-135 contributes to the substrate binding site. The active-site Proton acceptor; specific for L-alanine is Tyr-267. Residue Met-315 participates in substrate binding.

Belongs to the alanine racemase family. The cofactor is pyridoxal 5'-phosphate.

It carries out the reaction L-alanine = D-alanine. Its pathway is amino-acid biosynthesis; D-alanine biosynthesis; D-alanine from L-alanine: step 1/1. Functionally, catalyzes the interconversion of L-alanine and D-alanine. May also act on other amino acids. This chain is Alanine racemase (alr), found in Geobacter sulfurreducens (strain ATCC 51573 / DSM 12127 / PCA).